We begin with the raw amino-acid sequence, 202 residues long: MAMNGLSKMAVAAATALLLVLTIVPGAVAVTYTIEWTTGVDYSGWATGKTFRVGDILEFKYGSSHTVDVVDKAGYDGCDASSSTENHSDGDTKIDLKTVGINYFICSTPGHCRTNGGMKLAVNVVAGSAGPPATPTPPSSTPGTPTTPESPPSGGSPTPTTPTPGAGSTSPPPPPKASGASKGVMSYVLVGVSMVLGYGLWM.

The N-terminal stretch at 1–29 (MAMNGLSKMAVAAATALLLVLTIVPGAVA) is a signal peptide. The 97-residue stretch at 30 to 126 (VTYTIEWTTG…GMKLAVNVVA (97 aa)) folds into the Phytocyanin domain. Residue His65 participates in Cu cation binding. Asn86 carries N-linked (GlcNAc...) asparagine glycosylation. The Cu cation site is built by Cys106, His111, and Met118. Residues 129–181 (AGPPATPTPPSSTPGTPTTPESPPSGGSPTPTTPTPGAGSTSPPPPPKASGAS) form a disordered region. Over residues 141 to 169 (TPGTPTTPESPPSGGSPTPTTPTPGAGST) the composition is skewed to low complexity. Ser178 is lipidated: GPI-anchor amidated serine. Positions 179–202 (GASKGVMSYVLVGVSMVLGYGLWM) are cleaved as a propeptide — removed in mature form.

The protein localises to the cell membrane. Probably acts as an electron carrier involved in oxygen activation and/or lignin formation. The polypeptide is Uclacyanin-2 (Arabidopsis thaliana (Mouse-ear cress)).